Consider the following 427-residue polypeptide: MAKTIQAIRGMNDCLPTETPVWQWVESKVRSTLASYGYSEIRMPIVENTPLFARAIGEVTDVVSKEMFTFNDRDNESLTLRPEGTAGCVRAGIEHGLLYNQEQRLWYMGPMFRYERPQKGRYRQFHQAGVEVFGIANAEIDAELIILTARLWKELGIEQHVTLQLNSIGSLEARANYRSALVEFLQQYVGLMNEEEKERLLKNPLRILDTKNEALQQALNNAPKLLDYLDDDSREHFARLCAILDNVGISYEINPKLVRGLDYYNKTVFEWVTTALGAQGTICGGGRYDGLVEQLGGHATCGVGFAMGLERLILLVQEVNKAIPLPQSAVDIYLIFAGENTASAAFRLAEKVRSELPHLRTMMHCSGGNFKKQFKRADKSGAKIALVLGESEVQNQQVVVKDLLGGAEQQTVALEAVIDHLKTSFKE.

The protein belongs to the class-II aminoacyl-tRNA synthetase family. In terms of assembly, homodimer.

The protein localises to the cytoplasm. The enzyme catalyses tRNA(His) + L-histidine + ATP = L-histidyl-tRNA(His) + AMP + diphosphate + H(+). This Mannheimia succiniciproducens (strain KCTC 0769BP / MBEL55E) protein is Histidine--tRNA ligase.